A 75-amino-acid chain; its full sequence is ATP synthase subunit c (75 aa).

The next 2 membrane-spanning stretches (helical) occupy residues 8–28 (FLGI…VSNI) and 54–74 (AALT…LIFV).

This sequence belongs to the ATPase C chain family. F-type ATPases have 2 components, F(1) - the catalytic core - and F(0) - the membrane proton channel. F(1) has five subunits: alpha(3), beta(3), gamma(1), delta(1), epsilon(1). F(0) has three main subunits: a(1), b(2) and c(10-14). The alpha and beta chains form an alternating ring which encloses part of the gamma chain. F(1) is attached to F(0) by a central stalk formed by the gamma and epsilon chains, while a peripheral stalk is formed by the delta and b chains.

It is found in the cell inner membrane. Its function is as follows. F(1)F(0) ATP synthase produces ATP from ADP in the presence of a proton or sodium gradient. F-type ATPases consist of two structural domains, F(1) containing the extramembraneous catalytic core and F(0) containing the membrane proton channel, linked together by a central stalk and a peripheral stalk. During catalysis, ATP synthesis in the catalytic domain of F(1) is coupled via a rotary mechanism of the central stalk subunits to proton translocation. Functionally, key component of the F(0) channel; it plays a direct role in translocation across the membrane. A homomeric c-ring of between 10-14 subunits forms the central stalk rotor element with the F(1) delta and epsilon subunits. In Neorickettsia sennetsu (strain ATCC VR-367 / Miyayama) (Ehrlichia sennetsu), this protein is ATP synthase subunit c.